The primary structure comprises 367 residues: Probable protein phosphatase 2C 67 (367 aa).

Residues 1–79 form a disordered region; that stretch reads MAHQKREATS…DEKAATNSNV (79 aa). Positions 31–46 are enriched in basic and acidic residues; sequence AEKEHILTSDASHETN. Positions 91–365 constitute a PPM-type phosphatase domain; the sequence is EADAAEDKGC…DNCTAVLIVF (275 aa). Mn(2+)-binding residues include Asp-131, Gly-132, Asp-312, and Asp-356.

It belongs to the PP2C family. Mg(2+) is required as a cofactor. Mn(2+) serves as cofactor.

It carries out the reaction O-phospho-L-seryl-[protein] + H2O = L-seryl-[protein] + phosphate. The enzyme catalyses O-phospho-L-threonyl-[protein] + H2O = L-threonyl-[protein] + phosphate. The polypeptide is Probable protein phosphatase 2C 67 (Oryza sativa subsp. japonica (Rice)).